A 257-amino-acid chain; its full sequence is Deoxyribose-phosphate aldolase (257 aa).

The Proton donor/acceptor role is filled by D102. K166 acts as the Schiff-base intermediate with acetaldehyde in catalysis. K198 serves as the catalytic Proton donor/acceptor.

It belongs to the DeoC/FbaB aldolase family. DeoC type 2 subfamily.

The protein resides in the cytoplasm. It catalyses the reaction 2-deoxy-D-ribose 5-phosphate = D-glyceraldehyde 3-phosphate + acetaldehyde. The protein operates within carbohydrate degradation; 2-deoxy-D-ribose 1-phosphate degradation; D-glyceraldehyde 3-phosphate and acetaldehyde from 2-deoxy-alpha-D-ribose 1-phosphate: step 2/2. In terms of biological role, catalyzes a reversible aldol reaction between acetaldehyde and D-glyceraldehyde 3-phosphate to generate 2-deoxy-D-ribose 5-phosphate. This chain is Deoxyribose-phosphate aldolase, found in Shewanella halifaxensis (strain HAW-EB4).